A 307-amino-acid polypeptide reads, in one-letter code: Regulating synaptic membrane exocytosis protein 3 (307 aa).

The interval 86–120 (STETGIAVEMRSRVTRQGSRESTDGSTNSNSSEGT) is disordered. The span at 109-119 (DGSTNSNSSEG) shows a compositional bias: polar residues. The region spanning 155-273 (PMGDVHIAIM…DLSAVVTGWY (119 aa)) is the C2 domain. Residues Ser294 and Ser297 each carry the phosphoserine modification.

As to quaternary structure, binds PPFIA3. Does not bind RAB3. In terms of tissue distribution, expressed exclusively in brain with significant levels in cortex, cerebellum and olfactory bulb. Detected at lower level in hippocampus.

Its subcellular location is the synapse. In terms of biological role, regulates synaptic membrane exocytosis. The protein is Regulating synaptic membrane exocytosis protein 3 (Rims3) of Rattus norvegicus (Rat).